The primary structure comprises 358 residues: DNA methyltransferase CcrM (358 aa).

Positions Met-1–Asp-260 are methyltransferase. DNA-binding regions (target strand DNA) lie at residues Asp-31–Tyr-34 and Gly-39–Pro-45. 2 consecutive DNA-binding regions (non-target strand DNA) follow at residues Tyr-93–His-94 and Trp-109–Ile-110. DsDNA is bound at residue His-94. Positions Met-122–Asn-132 form a DNA-binding region, target strand DNA. The non-target strand DNA DNA-binding region spans Tyr-153 to Lys-157. DsDNA contacts are provided by Gln-164 and Arg-179. Residues Lys-187–Lys-193 constitute a DNA-binding region (target strand DNA). Residues Glu-259–Ala-355 enclose the RAMA domain. Positions Leu-261–Glu-270 are linker. 2 residues coordinate dsDNA: Lys-267 and Arg-272. The tract at residues Arg-272 to Asn-358 is non-specific DNA-binding. 2 consecutive DNA-binding regions (non-target strand DNA) follow at residues Ser-315 to His-317 and Asn-330 to Trp-332. Residue Arg-350 coordinates dsDNA.

The protein belongs to the N(4)/N(6)-methyltransferase family. As to quaternary structure, homodimer. In terms of processing, rapidly degraded by Lon protease prior to cell division.

The catalysed reaction is a 2'-deoxyadenosine in DNA + S-adenosyl-L-methionine = an N(6)-methyl-2'-deoxyadenosine in DNA + S-adenosyl-L-homocysteine + H(+). A beta subtype methylase that recognizes the double-stranded sequence 5'-GANTC-3' and methylates non-modifed A-2 on the hemimethylated, post-replicative DNA. Opens a bubble in the DNA at the recognition site, allowing precise recognition of the sequence and ensuring enzyme specificity. Functions only in the predivisional cell. Responsible for 5'-GANTC-3' methylation in the cell; methylation of hemimethylated sites generated after replication fork passage occurs late in the predivisional cell, near completion of chromosome replication but prior to cell division. Contributes to the accurate cell-cycle control of DNA replication and cellular morphology. The sequence is that of DNA methyltransferase CcrM (ccrMIM) from Caulobacter vibrioides (strain ATCC 19089 / CIP 103742 / CB 15) (Caulobacter crescentus).